We begin with the raw amino-acid sequence, 631 residues long: MQSNYSISYFLLILFTGTSSYFTIWNFVDHTRVGAFPEEDYIRLAYIIGGNFMTRLMFMQHFKSVLKYSDHFFRLHLITDENHRSDIHELMTSWNISNCEWFFHNLTEFEKRVAWIPNSHYSKYYGLSKLLIPEIIGNDIGKIMFMDVDIIFQTNIFDLWKQFRNFNNSQVFGMVENLSDWYLNKDGKKSVWPALGRGFNTGIIMFDLDKLRKNGWASKWRVVANKYLRIHGKTAMSDQDIFNAYIHDYPTEIIQIPCAYNYQLGALTKSKELCPETPLALHFNSQNKTVGKNYAFFDKIRKAFDEMDGSDLKRRRRSFKGNNQKDICHEYLPLDNFRIIPNAIGRMTKPAELCMVTQFSKDRLNHFLESANAWRHPISTAVYGKDKDLLDIAKAVTELNRTDITIHLVFEEPTESWMLDSLYPINFLRNVAIEHANCKYILMTDVDFVVLGDYGTIIDQTGNLKQKEVLVIPALEMTYPQLRLNLSNFLSRKDLVIEHLLNKTIQTFRETIWPSSHVPTNISKWIKSNRTYMVNYEKNYEPYFVIKKEECPFYDQRFGGFGWNKVTHVMQLKMMNYKFLVSPTSFMIHQNHNASKSLKRWRRDPHYQKCLHTLKNKFMKKTASRLGIKLR.

Topologically, residues 1-6 (MQSNYS) are cytoplasmic. A helical; Signal-anchor for type II membrane protein transmembrane segment spans residues 7–27 (ISYFLLILFTGTSSYFTIWNF). At 28-631 (VDHTRVGAFP…TASRLGIKLR (604 aa)) the chain is on the lumenal side. 11 N-linked (GlcNAc...) asparagine glycosylation sites follow: asparagine 95, asparagine 105, asparagine 167, asparagine 177, asparagine 287, asparagine 400, asparagine 485, asparagine 502, asparagine 521, asparagine 529, and asparagine 593.

The protein belongs to the glycosyltransferase 8 family.

The protein resides in the golgi apparatus membrane. In terms of biological role, probable glycosyltransferase. The protein is Glycosyltransferase-like protein LARGE (lge-1) of Caenorhabditis elegans.